Reading from the N-terminus, the 291-residue chain is ATP synthase gamma chain (291 aa).

It belongs to the ATPase gamma chain family. As to quaternary structure, F-type ATPases have 2 components, CF(1) - the catalytic core - and CF(0) - the membrane proton channel. CF(1) has five subunits: alpha(3), beta(3), gamma(1), delta(1), epsilon(1). CF(0) has three main subunits: a, b and c.

The protein resides in the cell inner membrane. Functionally, produces ATP from ADP in the presence of a proton gradient across the membrane. The gamma chain is believed to be important in regulating ATPase activity and the flow of protons through the CF(0) complex. In Neisseria gonorrhoeae (strain ATCC 700825 / FA 1090), this protein is ATP synthase gamma chain.